We begin with the raw amino-acid sequence, 213 residues long: 3-dehydroquinate dehydratase (213 aa).

3-dehydroquinate is bound by residues 27–29 (EVR) and R53. H111 (proton donor/acceptor) is an active-site residue. K138 (schiff-base intermediate with substrate) is an active-site residue. 2 residues coordinate 3-dehydroquinate: R175 and Q197.

The protein belongs to the type-I 3-dehydroquinase family. In terms of assembly, homodimer.

The enzyme catalyses 3-dehydroquinate = 3-dehydroshikimate + H2O. It participates in metabolic intermediate biosynthesis; chorismate biosynthesis; chorismate from D-erythrose 4-phosphate and phosphoenolpyruvate: step 3/7. In terms of biological role, involved in the third step of the chorismate pathway, which leads to the biosynthesis of aromatic amino acids. Catalyzes the cis-dehydration of 3-dehydroquinate (DHQ) and introduces the first double bond of the aromatic ring to yield 3-dehydroshikimate. The chain is 3-dehydroquinate dehydratase from Thermococcus gammatolerans (strain DSM 15229 / JCM 11827 / EJ3).